The sequence spans 319 residues: Coproporphyrin III ferrochelatase 2 (319 aa).

Residues tyrosine 13, arginine 30, 46–47, serine 54, and tyrosine 125 contribute to the Fe-coproporphyrin III site; that span reads RY. Residues histidine 181 and glutamate 262 each contribute to the Fe(2+) site.

Belongs to the ferrochelatase family.

It is found in the cytoplasm. The catalysed reaction is Fe-coproporphyrin III + 2 H(+) = coproporphyrin III + Fe(2+). It participates in porphyrin-containing compound metabolism; protoheme biosynthesis. Functionally, involved in coproporphyrin-dependent heme b biosynthesis. Catalyzes the insertion of ferrous iron into coproporphyrin III to form Fe-coproporphyrin III. This is Coproporphyrin III ferrochelatase 2 from Bacillus thuringiensis subsp. konkukian (strain 97-27).